The primary structure comprises 358 residues: Molybdenum import ATP-binding protein ModC (358 aa).

The 233-residue stretch at 2 to 234 folds into the ABC transporter domain; the sequence is NDDISASFFS…PDLPLAHLEE (233 aa). Residue 34-41 participates in ATP binding; the sequence is GRSGSGKT. The Mop domain maps to 293-358; sequence LSSISNCIPV…AQVKSVALID (66 aa).

Belongs to the ABC transporter superfamily. Molybdate importer (TC 3.A.1.8) family. The complex is composed of two ATP-binding proteins (ModC), two transmembrane proteins (ModB) and a solute-binding protein (ModA).

It is found in the cell inner membrane. The catalysed reaction is molybdate(out) + ATP + H2O = molybdate(in) + ADP + phosphate + H(+). Part of the ABC transporter complex ModABC involved in molybdenum import. Responsible for energy coupling to the transport system. This is Molybdenum import ATP-binding protein ModC from Hahella chejuensis (strain KCTC 2396).